The chain runs to 980 residues: MGIPAAFRWLSTRYPKIISPVIEDQPLVMEDGSTIPVDTTRPNPNGEEFDNLYLDMNGIVHPCSHPEDRPAPKDEEEMMMEVFRYTDRVVNMVRPRKILMIAVDGVAPRAKMNQQRSRRFRSAQEAQEKEQDKQELIKMLKQQNGGNLSTESLETVTKKAFDSNSITPGTPFMDILALSLRYWCQYKLNTDPGWAKLKIIISDATVPGEGEHKIMNFVRSQRASPDHDPNTRHVIYGLDADLIMLGLATHEPHFRVLREDVFFQDQKARLCKICGQKGHDAQNCRGEEKKKDGEHDEKDKGVALKPFIWLHVAVLREYLAVELGVPNLPFRFDLERAVDDWIFMCCFVGNDFLPHLPALEIREHGIDTLTKIWKDNLPVMGGYVTKDGHIDLERAQVILDGLAQQEDNIFKRRKEQEDRREANFKRRKLQNEVNGRGGRQGGPSHPKKINGHENPENGLPLQAVGAYTGRHEQTLTHDMVVNRSTAPDANVANKSAASVLKAQLQSQKSLSNPKPENPEQESPSALGKRKASSIEEGNSSVPDAASVSTPSTSAEEGPVDDVRLWEDGYADRYYEKKFHKDPKDIEFRHGVGRAYVEGLAWVLLYYFQGCPSWEWYYPYHYAPFAADFKDIAKMNISFEKGRVSKPFEQLMSVLPAASRHALPEVFHDLMLNPESNIIDFYPEDFEIDLNGKKFAWQGVALLPFIEMPRLLAAVQSKYPELSAADSARNEMGRDVLIFSEGHESLYDEVLTKFYSKKQGDSKFKLNPKKSDGLSGRVEKKEGYVPHSELKYPLERNSMPDLDYDRSVSVYYDFPQASQTHKSMLLRGVQLPTPALTQNDIQDMRSRANRGGRGGFGRGHDRGGYNGPGMTRGSQYNRNQGGYGRGNGHYPPAPASHVPPPPGAPGFGIGVPPPPPPNSYHNQPYDNRYGASSGYNQYRGPPHPANGAPGYHGHGDASSERGRGSGGYSSRGRYRDNRSYR.

The tract at residues 111–133 is disordered; sequence KMNQQRSRRFRSAQEAQEKEQDK. Positions 121–145 form a coiled coil; it reads RSAQEAQEKEQDKQELIKMLKQQNG. A CCHC-type zinc finger spans residues 269–286; it reads RLCKICGQKGHDAQNCRG. Residues 411–435 adopt a coiled-coil conformation; the sequence is KRRKEQEDRREANFKRRKLQNEVNG. The span at 413-424 shows a compositional bias: basic and acidic residues; that stretch reads RKEQEDRREANF. 3 disordered regions span residues 413–461, 491–560, and 845–980; these read RKEQ…GLPL, VANK…GPVD, and SRAN…RSYR. Polar residues-rich tracts occupy residues 503–514 and 535–554; these read QLQSQKSLSNPK and EEGN…STSA. Pro residues predominate over residues 890–903; it reads PPAPASHVPPPPGA. Basic and acidic residues predominate over residues 952-962; the sequence is GHGDASSERGR.

It belongs to the 5'-3' exonuclease family. XRN2/RAT1 subfamily. In terms of assembly, interacts with RAI1; the interaction is direct, stabilizes RAT1 protein structure and may stimulate its exoribonuclease activity. The interaction also stimulates RAI1 pyrophosphohydrolase activity, probably by recruiting it to mRNA substrates.

Its subcellular location is the nucleus. In terms of biological role, possesses 5'-&gt;3' exoribonuclease activity. Required for the processing of nuclear mRNA and rRNA precursors. May promote the termination of transcription by RNA polymerase II. Essential for vegetative cell growth and chromosome segregation. The polypeptide is 5'-3' exoribonuclease 2 (RAT1) (Gibberella zeae (strain ATCC MYA-4620 / CBS 123657 / FGSC 9075 / NRRL 31084 / PH-1) (Wheat head blight fungus)).